The sequence spans 170 residues: MGVEQPLGDNIVTASLDGLVNWARKTSIWPMTFGLACCAIEMMATGAAKHDLDRFGIIFRASPRQADCIIIAGTVTKKMLPVIKTVYEQMPEPKWVIAMGACACSGGVFDTYSVVQGIDEALPVDVYVPGCPPRPEALLYGIMKLQDKIGKERNSFGSAIGLGDRLEPAA.

Cysteine 37, cysteine 38, cysteine 102, and cysteine 131 together coordinate [4Fe-4S] cluster.

The protein belongs to the complex I 20 kDa subunit family. As to quaternary structure, NDH-1 is composed of 14 different subunits. Subunits NuoB, C, D, E, F, and G constitute the peripheral sector of the complex. The cofactor is [4Fe-4S] cluster.

Its subcellular location is the cell inner membrane. It carries out the reaction a quinone + NADH + 5 H(+)(in) = a quinol + NAD(+) + 4 H(+)(out). In terms of biological role, NDH-1 shuttles electrons from NADH, via FMN and iron-sulfur (Fe-S) centers, to quinones in the respiratory chain. The immediate electron acceptor for the enzyme in this species is believed to be ubiquinone. Couples the redox reaction to proton translocation (for every two electrons transferred, four hydrogen ions are translocated across the cytoplasmic membrane), and thus conserves the redox energy in a proton gradient. In Geotalea daltonii (strain DSM 22248 / JCM 15807 / FRC-32) (Geobacter daltonii), this protein is NADH-quinone oxidoreductase subunit B.